We begin with the raw amino-acid sequence, 87 residues long: Sec-independent protein translocase protein TatA (87 aa).

The chain crosses the membrane as a helical span at residues 3-23 (GTFSWTHLLIIALLFVVLFGA). Residues 47-87 (MQHETPQANAAPVQQPAQQLPPAQPAQAPAQPVNQAEQKSA) form a disordered region. Residues 52-87 (PQANAAPVQQPAQQLPPAQPAQAPAQPVNQAEQKSA) show a composition bias toward low complexity.

Belongs to the TatA/E family. The Tat system comprises two distinct complexes: a TatABC complex, containing multiple copies of TatA, TatB and TatC subunits, and a separate TatA complex, containing only TatA subunits. Substrates initially bind to the TatABC complex, which probably triggers association of the separate TatA complex to form the active translocon.

It localises to the cell membrane. Its function is as follows. Part of the twin-arginine translocation (Tat) system that transports large folded proteins containing a characteristic twin-arginine motif in their signal peptide across membranes. TatA could form the protein-conducting channel of the Tat system. This Nocardia farcinica (strain IFM 10152) protein is Sec-independent protein translocase protein TatA.